The chain runs to 78 residues: Small ribosomal subunit protein bS18c (78 aa).

Belongs to the bacterial ribosomal protein bS18 family. Part of the 30S ribosomal subunit.

It localises to the plastid. Its subcellular location is the chloroplast. The chain is Small ribosomal subunit protein bS18c from Oltmannsiellopsis viridis (Marine flagellate).